We begin with the raw amino-acid sequence, 165 residues long: Ribosome maturation factor RimM (165 aa).

One can recognise a PRC barrel domain in the interval 90–161 (EDEYFIVDLV…LITIRPSGEW (72 aa)).

This sequence belongs to the RimM family. Binds ribosomal protein uS19.

The protein localises to the cytoplasm. An accessory protein needed during the final step in the assembly of 30S ribosomal subunit, possibly for assembly of the head region. Essential for efficient processing of 16S rRNA. May be needed both before and after RbfA during the maturation of 16S rRNA. It has affinity for free ribosomal 30S subunits but not for 70S ribosomes. The sequence is that of Ribosome maturation factor RimM from Clostridium perfringens (strain ATCC 13124 / DSM 756 / JCM 1290 / NCIMB 6125 / NCTC 8237 / Type A).